The primary structure comprises 129 residues: Gene 58 protein (129 aa).

Residues 87–129 are disordered; that stretch reads GNIPVQRKPARKPSRRVFGESRSSGSSGSTVRPGIRGRSTPWS. Residues 106–115 are compositionally biased toward low complexity; sequence ESRSSGSSGS.

The protein is Gene 58 protein (58) of Mycobacterium (Mycobacteriophage D29).